The primary structure comprises 203 residues: Acid phosphatase (203 aa).

The active-site Tele-phosphohistidine intermediate is the histidine 13. Residue glutamate 85 is the Proton donor/acceptor of the active site.

The protein belongs to the phosphoglycerate mutase family. In terms of assembly, homodimer.

The enzyme catalyses a phosphate monoester + H2O = an alcohol + phosphate. The catalysed reaction is beta-D-fructose 1,6-bisphosphate + H2O = beta-D-fructose 6-phosphate + phosphate. Its pathway is carbohydrate biosynthesis; gluconeogenesis. With respect to regulation, in contrast to classical FBPases, is resistant to inhibition by lithium. Functionally, phosphatase with a broad specificity. Can dephosphorylate a variety of substrates including phosphorylated sugars like fructose-6-phosphate (F6P). Is able to function in vivo as a fructose-1,6-bisphosphatase (FBPase) and to maintain gluconeogenesis when the classical FBPase GlpX is absent. Shows negligible phosphoglycerate mutase activity. Has no phosphatase activity against 3-phosphoglycerate, 2,3-bisphosphoglycerate, or hydrophobic substrates such as alpha-napthyl phosphate. The chain is Acid phosphatase from Mycobacterium tuberculosis (strain ATCC 25618 / H37Rv).